The sequence spans 340 residues: Ketol-acid reductoisomerase (NADP(+)) (340 aa).

The 182-residue stretch at 1–182 (MRVYYDRDCD…GGGRSGIIET (182 aa)) folds into the KARI N-terminal Rossmann domain. NADP(+) contacts are provided by residues 24–27 (YGSQ), Arg-48, Ser-51, Ser-53, and 83–86 (DELQ). Residue His-108 is part of the active site. Position 134 (Gly-134) interacts with NADP(+). One can recognise a KARI C-terminal knotted domain in the interval 183–329 (NFRQECETDL…EKLRGMMPWI (147 aa)). Residues Asp-191, Glu-195, Glu-227, and Glu-231 each coordinate Mg(2+). Ser-252 contacts substrate.

The protein belongs to the ketol-acid reductoisomerase family. It depends on Mg(2+) as a cofactor.

It catalyses the reaction (2R)-2,3-dihydroxy-3-methylbutanoate + NADP(+) = (2S)-2-acetolactate + NADPH + H(+). It carries out the reaction (2R,3R)-2,3-dihydroxy-3-methylpentanoate + NADP(+) = (S)-2-ethyl-2-hydroxy-3-oxobutanoate + NADPH + H(+). It functions in the pathway amino-acid biosynthesis; L-isoleucine biosynthesis; L-isoleucine from 2-oxobutanoate: step 2/4. The protein operates within amino-acid biosynthesis; L-valine biosynthesis; L-valine from pyruvate: step 2/4. In terms of biological role, involved in the biosynthesis of branched-chain amino acids (BCAA). Catalyzes an alkyl-migration followed by a ketol-acid reduction of (S)-2-acetolactate (S2AL) to yield (R)-2,3-dihydroxy-isovalerate. In the isomerase reaction, S2AL is rearranged via a Mg-dependent methyl migration to produce 3-hydroxy-3-methyl-2-ketobutyrate (HMKB). In the reductase reaction, this 2-ketoacid undergoes a metal-dependent reduction by NADPH to yield (R)-2,3-dihydroxy-isovalerate. This is Ketol-acid reductoisomerase (NADP(+)) from Cereibacter sphaeroides (strain ATCC 17029 / ATH 2.4.9) (Rhodobacter sphaeroides).